The chain runs to 398 residues: Pentalenolactone synthase (398 aa).

Cys347 contributes to the heme binding site.

This sequence belongs to the cytochrome P450 family. Requires heme as cofactor.

It catalyses the reaction pentalenolactone F + 2 reduced [2Fe-2S]-[ferredoxin] + O2 + 2 H(+) = pentalenolactone + 2 oxidized [2Fe-2S]-[ferredoxin] + 2 H2O. It participates in antibiotic biosynthesis; pentalenolactone biosynthesis. Catalyzes the final step in the biosynthesis of the sesquiterpenoid antibiotic pentalenolactone by mediating the oxidative rearrangement of pentalenolactone F to pentalenolactone. This Streptomyces exfoliatus (Streptomyces hydrogenans) protein is Pentalenolactone synthase (penM).